The chain runs to 361 residues: 3-isopropylmalate dehydrogenase (361 aa).

78-91 provides a ligand contact to NAD(+); that stretch reads GTQWDSLPRHLRPE. R98, R108, R136, and D226 together coordinate substrate. Mg(2+) is bound by residues D226, D250, and D254. Residue 284-296 participates in NAD(+) binding; that stretch reads GSAPDIAGQDKAN.

Belongs to the isocitrate and isopropylmalate dehydrogenases family. LeuB type 1 subfamily. In terms of assembly, homodimer. Mg(2+) is required as a cofactor. The cofactor is Mn(2+).

The protein localises to the cytoplasm. The catalysed reaction is (2R,3S)-3-isopropylmalate + NAD(+) = 4-methyl-2-oxopentanoate + CO2 + NADH. The protein operates within amino-acid biosynthesis; L-leucine biosynthesis; L-leucine from 3-methyl-2-oxobutanoate: step 3/4. Catalyzes the oxidation of 3-carboxy-2-hydroxy-4-methylpentanoate (3-isopropylmalate) to 3-carboxy-4-methyl-2-oxopentanoate. The product decarboxylates to 4-methyl-2 oxopentanoate. The protein is 3-isopropylmalate dehydrogenase of Thermosynechococcus vestitus (strain NIES-2133 / IAM M-273 / BP-1).